Reading from the N-terminus, the 184-residue chain is ATP synthase subunit b, chloroplastic (184 aa).

A helical transmembrane segment spans residues 27–49; it reads LATNPINLSVVLGVLIFFGKGVL.

It belongs to the ATPase B chain family. As to quaternary structure, F-type ATPases have 2 components, F(1) - the catalytic core - and F(0) - the membrane proton channel. F(1) has five subunits: alpha(3), beta(3), gamma(1), delta(1), epsilon(1). F(0) has four main subunits: a(1), b(1), b'(1) and c(10-14). The alpha and beta chains form an alternating ring which encloses part of the gamma chain. F(1) is attached to F(0) by a central stalk formed by the gamma and epsilon chains, while a peripheral stalk is formed by the delta, b and b' chains.

The protein localises to the plastid. It localises to the chloroplast thylakoid membrane. Its function is as follows. F(1)F(0) ATP synthase produces ATP from ADP in the presence of a proton or sodium gradient. F-type ATPases consist of two structural domains, F(1) containing the extramembraneous catalytic core and F(0) containing the membrane proton channel, linked together by a central stalk and a peripheral stalk. During catalysis, ATP synthesis in the catalytic domain of F(1) is coupled via a rotary mechanism of the central stalk subunits to proton translocation. Functionally, component of the F(0) channel, it forms part of the peripheral stalk, linking F(1) to F(0). This chain is ATP synthase subunit b, chloroplastic, found in Lepidium virginicum (Virginia pepperweed).